We begin with the raw amino-acid sequence, 424 residues long: UDP-sugar transporter protein SLC35A5 (424 aa).

Over 1 to 8 (MEKQCCSH) the chain is Cytoplasmic. The chain crosses the membrane as a helical span at residues 9-29 (PVICSLSTMYTFLLGAIFIAL). Topologically, residues 30-53 (SSSRILLVKYSANEENKYDYLPTT) are lumenal. The chain crosses the membrane as a helical span at residues 54 to 74 (VNVCSELVKLVFCVLVSFCVI). Residues 75–93 (KKDHQSRNLKYASWKEFSD) lie on the Cytoplasmic side of the membrane. Residues 94-116 (FMKWSIPAFLYFLDNLIVFYVLS) form a helical membrane-spanning segment. Residues 117–119 (YLQ) are Lumenal-facing. Residues 120-142 (PAMAVIFSNFSIITTALLFRIVL) traverse the membrane as a helical segment. Residues 143–147 (KRRLN) lie on the Cytoplasmic side of the membrane. The chain crosses the membrane as a helical span at residues 148-168 (WIQWASLLTLFLSIVALTAGT). The Lumenal segment spans residues 169–228 (KTLQHNLAGRGFHHDAFFSPSNSCLLFRSECPRKDNCTAKEWTFPEAKWNTTARVFSHIR). A glycan (N-linked (GlcNAc...) asparagine) is linked at Asn-204. Residues 229–249 (LGMGHVLIIVQCFISSMANIY) form a helical membrane-spanning segment. Over 250 to 263 (NEKILKEGNQLTES) the chain is Cytoplasmic. Residues 264 to 284 (IFIQNSKLYFFGILFNGLTLG) form a helical membrane-spanning segment. Topologically, residues 285–303 (LQRSNRDQIKNCGFFYGHS) are lumenal. A helical membrane pass occupies residues 304–324 (AFSVALIFVTAFQGLSVAFIL). At 325–330 (KFLDNM) the chain is on the cytoplasmic side. A helical membrane pass occupies residues 331–351 (FHVLMAQVTTVIITTVSVLVF). The Lumenal segment spans residues 352–354 (DFR). Residues 355-375 (PSLEFFLEAPSVLLSIFIYNA) form a helical membrane-spanning segment. Over 376 to 424 (SKPQVPEYAPRQERIRDLSGNLWERSSGDGEELERLTKPKSDESDEDTF) the chain is Cytoplasmic. Residues Ser-394, Ser-416, and Ser-419 each carry the phosphoserine modification. Residues 397-424 (LWERSSGDGEELERLTKPKSDESDEDTF) are disordered. Residues 408-417 (LERLTKPKSD) are compositionally biased toward basic and acidic residues.

Belongs to the nucleotide-sugar transporter family. SLC35A subfamily. In terms of assembly, probably forms homooligomers and heterooligomers with SLC35A1, SLC35A2, SLC35A3 and SLC35A4.

It localises to the golgi apparatus membrane. It carries out the reaction UMP(out) + UDP-alpha-D-glucuronate(in) = UMP(in) + UDP-alpha-D-glucuronate(out). It catalyses the reaction UMP(out) + UDP-N-acetyl-alpha-D-glucosamine(in) = UMP(in) + UDP-N-acetyl-alpha-D-glucosamine(out). The enzyme catalyses UDP-N-acetyl-alpha-D-galactosamine(in) + UMP(out) = UDP-N-acetyl-alpha-D-galactosamine(out) + UMP(in). In terms of biological role, probable UDP-sugar:UMP transmembrane antiporter involved in UDP-alpha-D-glucuronate/UDP-GlcA, UDP-GlcNAc/UDP-N-acetyl-alpha-D-glucosamine and UDP-N-acetyl-alpha-D-galactosamine/UDP-GalNAc transport from the cytosol to the lumen of the Golgi. The protein is UDP-sugar transporter protein SLC35A5 of Homo sapiens (Human).